Consider the following 664-residue polypeptide: Prelamin-A/C (664 aa).

At M1 the chain carries N-acetylmethionine. The tract at residues 1 to 25 (METPSQRRATRSGAQASSTPLSPTR) is disordered. Residues 1-33 (METPSQRRATRSGAQASSTPLSPTRITRLQEKE) form a head region. The interval 1–130 (METPSQRRAT…TKKEGDLIAA (130 aa)) is interaction with MLIP. At T3 the chain carries Phosphothreonine. S5 carries the phosphoserine modification. T10 bears the Phosphothreonine mark. 2 positions are modified to phosphoserine: S12 and S18. At T19 the chain carries Phosphothreonine. S22 is modified (phosphoserine; by CDK1). Positions 31–387 (EKEDLQELND…KLLEGEEERL (357 aa)) constitute an IF rod domain. K32 is modified (N6-acetyllysine; alternate). K32 is modified (N6-succinyllysine; alternate). Residue K32 forms a Glycyl lysine isopeptide (Lys-Gly) (interchain with G-Cter in SUMO2); alternate linkage. Residues 34 to 70 (DLQELNDRLAVYIDRVRSLETENAGLRLRITESEEVV) form a coil 1A region. Phosphoserine occurs at positions 51, 66, and 71. The segment at 71–80 (SREVSGIKAA) is linker 1. K78 and K97 each carry N6-acetyllysine. Residues 81–218 (YEAELGDARK…NIYSEELRET (138 aa)) form a coil 1B region. A Glycyl lysine isopeptide (Lys-Gly) (interchain with G-Cter in SUMO2) cross-link involves residue K97. S107 is modified (phosphoserine). An N6-acetyllysine mark is found at K108, K114, K123, K135, K144, and K155. The residue at position 171 (K171) is an N6-acetyllysine; alternate. At K171 the chain carries N6-succinyllysine; alternate. K171 participates in a covalent cross-link: Glycyl lysine isopeptide (Lys-Gly) (interchain with G-Cter in SUMO2); alternate. N6-acetyllysine is present on residues K180, K201, and K208. Residue K201 forms a Glycyl lysine isopeptide (Lys-Gly) (interchain with G-Cter in SUMO2); alternate linkage. K201 is covalently cross-linked (Glycyl lysine isopeptide (Lys-Gly) (interchain with G-Cter in SUMO); alternate). K208 is covalently cross-linked (Glycyl lysine isopeptide (Lys-Gly) (interchain with G-Cter in SUMO2)). Position 212 is a phosphoserine (S212). Glycyl lysine isopeptide (Lys-Gly) (interchain with G-Cter in SUMO2) cross-links involve residues K219 and K233. Positions 219 to 242 (KRRHETRLVEIDNGKQREFESRLA) are linker 2. K233, K260, K265, and K270 each carry N6-acetyllysine. The interval 243–383 (DALQELRAQH…HAYRKLLEGE (141 aa)) is coil 2. The interval 259-331 (YKKELEKTYS…DLEDSLARER (73 aa)) is necessary and sufficient for the interaction with IFFO1. K260 is covalently cross-linked (Glycyl lysine isopeptide (Lys-Gly) (interchain with G-Cter in SUMO2); alternate). K270 is covalently cross-linked (Glycyl lysine isopeptide (Lys-Gly) (interchain with G-Cter in SUMO2); alternate). Residue S277 is modified to Phosphoserine. A Phosphoserine; by ATR modification is found at S282. Phosphoserine is present on residues S301 and S307. Residue K311 forms a Glycyl lysine isopeptide (Lys-Gly) (interchain with G-Cter in SUMO2); alternate linkage. 3 positions are modified to N6-acetyllysine: K311, K316, and K341. Residues K366 and K378 each participate in a glycyl lysine isopeptide (Lys-Gly) (interchain with G-Cter in SUMO2) cross-link. The tract at residues 384–442 (EERLRLSPSPTSQRSRGRASSHSSQTQGGGSVTKKRKLESTESRSSFSQHARTSGRVAV) is disordered. The tract at residues 384 to 664 (EERLRLSPSP…TQSPQNCSIM (281 aa)) is tail. A Phosphoserine modification is found at S390. S392 carries the post-translational modification Phosphoserine; by CDK1. Position 395 is a phosphoserine; by ATR (S395). Phosphoserine is present on residues S398, S403, S404, S406, S407, and S414. T416 bears the Phosphothreonine mark. K417 carries the N6-acetyllysine modification. Residues K417 and K420 each participate in a glycyl lysine isopeptide (Lys-Gly) (interchain with G-Cter in SUMO2) cross-link. Positions 417 to 422 (KKRKLE) match the Nuclear localization signal motif. Phosphoserine occurs at positions 423, 426, 429, and 431. Positions 426–435 (SRSSFSQHAR) are enriched in polar residues. One can recognise an LTD domain in the interval 428–545 (SSFSQHARTS…EEVAMRKLVR (118 aa)). K450 is covalently cross-linked (Glycyl lysine isopeptide (Lys-Gly) (interchain with G-Cter in SUMO2); alternate). An N6-acetyllysine mark is found at K450 and K457. S458 and S463 each carry phosphoserine. Glycyl lysine isopeptide (Lys-Gly) (interchain with G-Cter in SUMO2) cross-links involve residues K470 and K486. K486 carries the post-translational modification N6-acetyllysine. A phosphothreonine mark is found at T496, T505, and T510. 2 positions are modified to phosphoserine: S533 and S546. T548 bears the Phosphothreonine mark. Positions 552 to 576 (DDEDEDGDDLLHHHHGSHCSSSGDP) are disordered. S568 and S571 each carry phosphoserine. K597 is covalently cross-linked (Glycyl lysine isopeptide (Lys-Gly) (interchain with G-Cter in SUMO2); alternate). Residue K597 forms a Glycyl lysine isopeptide (Lys-Gly) (interchain with G-Cter in SUMO1); alternate linkage. The segment at 598 to 619 (ASASGSGAQVGGPISSGSSASS) is disordered. Phosphoserine is present on residues S612, S613, S616, and S619. 2 O-linked (GlcNAc) serine glycosylation sites follow: S625 and S628. Residues S628, S632, S636, and S652 each carry the phosphoserine modification. Residues 647 to 661 (LLGNSSPRTQSPQNC) constitute a propeptide, removed in Lamin-A/C form. C661 carries the post-translational modification Cysteine methyl ester. Residue C661 is the site of S-farnesyl cysteine attachment. Positions 662–664 (SIM) are cleaved as a propeptide — removed in Prelamin-A/C form and in Lamin-A/C form.

Belongs to the intermediate filament family. In terms of assembly, homodimer of lamin A and lamin C. Lamin dimers then assemble into dimeric head-to-tail polymers. Ultimately, two head-to-tail polymers assemble laterally into a protofilament with a uniformly shaped rod of 3.5 nm in diameter. Interacts with lamin-associated polypeptides IA, IB and TMPO-alpha, RB1 and with emerin. Interacts with SREBF1, SREBF2, SUN2 and TMEM43. Interacts with TMEM201. Proteolytically processed isoform A interacts with NARF. Interacts with SUN1. Interacts with MLIP. Interacts with DMPK; may regulate nuclear envelope stability. Interacts with SUV39H1; the interaction increases stability of SUV39H1. Interacts with SYNE2. Interacts with ITSN1 isoform 2. Interacts with IFFO1; enables the formation of an interior nucleoskeleton that is recruited to DNA double-strand breaks. As to quaternary structure, interacts with EMD. Interacts (via C-terminus) with LEMD2 (via N-terminus) (in vitro). Proteolytic cleavage of the C-terminal of 18 residues of prelamin-A/C results in the production of lamin-A/C. The prelamin-A/C maturation pathway includes farnesylation of CAAX motif by protein farnesyltransferase (FNTA and FNTB), removal of the last three amino acids (-AAX) by RCE1/FACE2 and/or ZMPSTE24, methylation of the C-terminal cysteine by ICMT and endoproteolytic removal of the last 15 C-terminal amino acids by ZMPSTE24. Proteolytic cleavage requires prior farnesylation and methylation, and absence of these blocks cleavage. In terms of processing, farnesylation of prelamin-A/C facilitates nuclear envelope targeting. Post-translationally, phosphorylation plays a key role in lamin organization, subcellular localization and nuclear envelope disintegration. Phosphorylation by CDK1 at Ser-22 and Ser-392 at the onset of mitosis drives lamin disassembly and nuclear envelope breakdown. Phosphorylation at Ser-22 and Ser-392 during interphase promotes localization to the nucleoplasm and regulates lamina assembly. Phosphorylation at Ser-22, Ser-392 and Ser-628 during interphase causes redistribution between the nucleus and the cytoplasm. Phosphorylation at Ser-22 by CDK1 regulates matrix stiffness. Phosphorylation status of Ser-22 determines its localization between double-strand break (DSB) sites and the nuclear matrix. Phosphorylated by ATR at Ser-282 in response to DNA damage, leading to lamin disassembly and nuclear envelope rupture. Phosphorylation also regulates stability in micronuclei arising from genome instability: phosphorylation at Ser-395 by ATR in response to genome instability and double-stranded DNA breaks primes LMNA for subsequent phosphorylation at Ser-392 by CDK1 and micronuclei envelope rupture. The rupture of micronuclear envelope triggers the cGAS-STING pathway thereby activating the type I interferon response and innate immunity. Acetylation by KAT8 is required for nuclear architecture. In terms of processing, sumoylation is necessary for the localization to the nuclear envelope. In terms of tissue distribution, in the arteries, prelamin-A/C accumulation is not observed in young healthy vessels but is prevalent in medial vascular smooth muscle cells (VSMCs) from aged individuals and in atherosclerotic lesions, where it often colocalizes with senescent and degenerate VSMCs. Prelamin-A/C expression increases with age and disease. In normal aging, the accumulation of prelamin-A/C is caused in part by the down-regulation of ZMPSTE24/FACE1 in response to oxidative stress.

Its subcellular location is the nucleus lamina. The protein resides in the nucleus envelope. It localises to the nucleus. It is found in the nucleoplasm. The protein localises to the nucleus matrix. Its subcellular location is the nucleus speckle. In terms of biological role, lamins are intermediate filament proteins that assemble into a filamentous meshwork, and which constitute the major components of the nuclear lamina, a fibrous layer on the nucleoplasmic side of the inner nuclear membrane. Lamins provide a framework for the nuclear envelope, bridging the nuclear envelope and chromatin, thereby playing an important role in nuclear assembly, chromatin organization, nuclear membrane and telomere dynamics. Lamin A and C also regulate matrix stiffness by conferring nuclear mechanical properties. The structural integrity of the lamina is strictly controlled by the cell cycle, as seen by the disintegration and formation of the nuclear envelope in prophase and telophase, respectively. Lamin A and C are present in equal amounts in the lamina of mammals. Also invoved in DNA repair: recruited by DNA repair proteins XRCC4 and IFFO1 to the DNA double-strand breaks (DSBs) to prevent chromosome translocation by immobilizing broken DNA ends. Required for normal development of peripheral nervous system and skeletal muscle and for muscle satellite cell proliferation. Required for osteoblastogenesis and bone formation. Also prevents fat infiltration of muscle and bone marrow, helping to maintain the volume and strength of skeletal muscle and bone. Required for cardiac homeostasis. Its function is as follows. Prelamin-A/C can accelerate smooth muscle cell senescence. It acts to disrupt mitosis and induce DNA damage in vascular smooth muscle cells (VSMCs), leading to mitotic failure, genomic instability, and premature senescence. The chain is Prelamin-A/C (LMNA) from Homo sapiens (Human).